The chain runs to 512 residues: Bestrophin-2 (512 aa).

The Cytoplasmic portion of the chain corresponds to 1–31 (MTVTYTARVAKARFGGFSKLLLLWRGSIYKL). A Ca(2+)-binding site is contributed by A10. Residues 32 to 51 (LWRELLCFLGLFMALSAAYR) form a helical membrane-spanning segment. Residues 52–60 (FVLTEEQKR) are Extracellular-facing. The helical transmembrane segment at 61 to 82 (YFEKLVLYCDRYASLIPVSFVL) threads the bilayer. The Cytoplasmic portion of the chain corresponds to 83–238 (GFYVTLVVHR…WISVPLVYTQ (156 aa)). Residues 239–255 (VVTIAVYSYFLACLIGR) traverse the membrane as a helical segment. Residues 256–274 (QFLDPAQGYKDHDLDLCVP) lie on the Extracellular side of the membrane. The chain crosses the membrane as a helical span at residues 275–288 (IFTLLQFFFYAGWL). Residues 289-512 (KVAEQLINPF…PIGEEEESLA (224 aa)) are Cytoplasmic-facing. Q293, N296, D301, and D304 together coordinate Ca(2+). Residues 453-512 (VDLGQPEPESEPITGPESPALVPAPRAPSEPLTVVPLSGTRGPAPPWLPSPIGEEEESLA) are disordered.

This sequence belongs to the anion channel-forming bestrophin (TC 1.A.46) family. Calcium-sensitive chloride channel subfamily. As to quaternary structure, pentamer. Interacts with GLUL; this interaction tethers a fraction of GLUL to the membrane, causing a decrease of cytosolic glutamine synthase (GS) activity and inhibits the chloride channel activity of BEST2 by affecting the gating at the aperture in the absence of intracellular glutamate.

The protein localises to the cell membrane. Its subcellular location is the basolateral cell membrane. It carries out the reaction chloride(in) = chloride(out). The catalysed reaction is iodide(out) = iodide(in). It catalyses the reaction hydrogencarbonate(in) = hydrogencarbonate(out). The enzyme catalyses L-glutamate(out) = L-glutamate(in). It carries out the reaction L-glutamine(out) = L-glutamine(in). Its activity is regulated as follows. Chloride channel activity is allosterically inhibited by GLUL/glutamine synthase (GS) which affects the gating at the aperture in the absence of intracellular glutamate. Inhibitory effect of GLUL is relieved upon increasing of intracellular level of L-glutamate. Its function is as follows. Ligand-gated anion channel that allows the movement of anions across cell membranes when activated by calcium (Ca2+). Transports a large specter of anions, namely mediates the movement of chloride, L-glutamate and iodide. Calcium-binding triggers the dilation of the aperture, but calcium-dependent gating is only effective when the size of the passing anion is bigger than the closed aperture. Mediates the calcium-activated hydrogencarbonate movement and participates in colonic hydrogencarbonate secretion concomitant with mucin secretion. In non-pigmented epithelium (NPE), mediates the efflux of intracellular L-glutamate; binding of intracellular L-glutamate activates and open both the neck and the aperture of the channel, leading to L-glutamate exit promoting chloride influx movement from the extracellular side in trans. Also exhibits a directional permeability for intracellular glutamine, in a similar manner as for L-glutamate. This Bos taurus (Bovine) protein is Bestrophin-2.